We begin with the raw amino-acid sequence, 347 residues long: S-adenosylmethionine:tRNA ribosyltransferase-isomerase (347 aa).

Belongs to the QueA family. Monomer.

It is found in the cytoplasm. It catalyses the reaction 7-aminomethyl-7-carbaguanosine(34) in tRNA + S-adenosyl-L-methionine = epoxyqueuosine(34) in tRNA + adenine + L-methionine + 2 H(+). It participates in tRNA modification; tRNA-queuosine biosynthesis. Functionally, transfers and isomerizes the ribose moiety from AdoMet to the 7-aminomethyl group of 7-deazaguanine (preQ1-tRNA) to give epoxyqueuosine (oQ-tRNA). This chain is S-adenosylmethionine:tRNA ribosyltransferase-isomerase, found in Streptococcus thermophilus (strain ATCC BAA-491 / LMD-9).